The following is a 360-amino-acid chain: G-box-binding factor 2 (360 aa).

A compositionally biased stretch (polar residues) spans 1-16 (MGSNEEGNPTNNSDKP). 2 disordered regions span residues 1–26 (MGSN…EQSN) and 150–275 (KVGS…AETE). The segment covering 164 to 184 (SQSSENDGSSNGSDGNTTGGE) has biased composition (low complexity). Residues 198–208 (TGERPSSQNSL) are compositionally biased toward polar residues. Residues 246–264 (NEKEVKREKRKQSNRESAR) show a composition bias toward basic and acidic residues. A bZIP domain is found at 249-312 (EVKREKRKQS…EKLRLENEAI (64 aa)). Positions 251–270 (KREKRKQSNRESARRSRLRK) are basic motif. Residues 277-312 (LSVKVDALVAENMSLRSKLGQLNNESEKLRLENEAI) form a leucine-zipper region. A compositionally biased stretch (polar residues) spans 335–352 (NSVSGSKTVQHQLLNASP). A disordered region spans residues 335-360 (NSVSGSKTVQHQLLNASPITDPVAAS).

This sequence belongs to the bZIP family. As to quaternary structure, DNA-binding heterodimer. Interacts with GBF4. Interacts with BZIP16 and BZIP68. As to expression, found in both light and dark grown leaves.

The protein localises to the nucleus. Binds to the G-box motif (5'-CCACGTGG-3') of the rbcS-1A gene promoter. G-box and G-box-like motifs are cis-acting elements defined in promoters of certain plant genes which are regulated by such diverse stimuli as light-induction or hormone control. GBF2 is found to bind asymmetrically to the G-box. The protein is G-box-binding factor 2 (GBF2) of Arabidopsis thaliana (Mouse-ear cress).